The following is a 150-amino-acid chain: UPF0260 protein PputGB1_4117 (150 aa).

Belongs to the UPF0260 family.

The chain is UPF0260 protein PputGB1_4117 from Pseudomonas putida (strain GB-1).